A 173-amino-acid chain; its full sequence is Large ribosomal subunit protein bL9 (173 aa).

The protein belongs to the bacterial ribosomal protein bL9 family.

Its function is as follows. Binds to the 23S rRNA. This Rickettsia bellii (strain RML369-C) protein is Large ribosomal subunit protein bL9.